The following is a 196-amino-acid chain: Orotate phosphoribosyltransferase (196 aa).

117 to 125 (EDIVTTGLS) is a binding site for 5-phospho-alpha-D-ribose 1-diphosphate. Orotate contacts are provided by Thr121 and Arg149.

The protein belongs to the purine/pyrimidine phosphoribosyltransferase family. PyrE subfamily. In terms of assembly, homodimer. Requires Mg(2+) as cofactor.

The catalysed reaction is orotidine 5'-phosphate + diphosphate = orotate + 5-phospho-alpha-D-ribose 1-diphosphate. It participates in pyrimidine metabolism; UMP biosynthesis via de novo pathway; UMP from orotate: step 1/2. Catalyzes the transfer of a ribosyl phosphate group from 5-phosphoribose 1-diphosphate to orotate, leading to the formation of orotidine monophosphate (OMP). This chain is Orotate phosphoribosyltransferase, found in Methylobacterium sp. (strain 4-46).